A 617-amino-acid polypeptide reads, in one-letter code: MAGAKAYRLGAVLLLIHLIFLISGAEAASFQRNQLLQKEPDLRLENVQKFPSPEMIRALEYIEKLRQQAHREESSPDYNPYQGVSVPLQLKENGEESHLAESSRDALSEDEWMRIILEALRQAENEPPSAPKENKPYALNLEKNFPVDTPDDYETQQWPERKLKHMRFPLMYEENSRENPFKRTNEIVEEQYTPQSLATLESVFQELGKLTGPSNQKRERVDEEQKLYTDDEDDVYKTNNIAYEDVVGGEDWSPIEEKIETQTQEEVRDSKENTEKNEQINEEMKRSGQLGLPDEENRRESKDQLSEDASKVITYLRRLVNAVGSGRSQSGPNGDRAARLLQKPLDSQSIYQLIEISRNLQIPPEDLIEMLKAGEKPNGLVEPEQDLELAVDLDDIPEADLDRPDMFQSKMLSKGGYPKAPGRGMVEALPDGLSVEDILNVLGMENVVNQKSPYFPNQYSQDKALMRLPYGPGKSRANQIPKVAWIPDVESRQAPYENLNDQELGEYLARMLVKYPELLNTNQLKRVPSPVSSEDDLQEEEQLEQAIKEHLGPGSSQEMERLAKVSKRIPVGSLKNEDTPNRQYLDEDMLLKVLEYLNQEQAEQGREHLAKRAMENM.

The first 30 residues, 1–30, serve as a signal peptide directing secretion; the sequence is MAGAKAYRLGAVLLLIHLIFLISGAEAASF. Position 153 is a sulfotyrosine (Y153). Residues S176 and S270 each carry the phosphoserine modification. Composition is skewed to basic and acidic residues over residues 261–286 and 295–307; these read TQTQEEVRDSKENTEKNEQINEEMKR and EENRRESKDQLSE. Residues 261–307 are disordered; it reads TQTQEEVRDSKENTEKNEQINEEMKRSGQLGLPDEENRRESKDQLSE. A phosphoserine mark is found at S434, S532, S555, and S556.

It belongs to the chromogranin/secretogranin protein family. As to quaternary structure, interacts with Secretogranin III/SCG3.

Its subcellular location is the secreted. Its function is as follows. Neuroendocrine protein of the granin family that regulates the biogenesis of secretory granules. The chain is Secretogranin-2 (Scg2) from Mus musculus (Mouse).